We begin with the raw amino-acid sequence, 447 residues long: Serine/threonine-protein phosphatase 2A 55 kDa regulatory subunit B gamma isoform (447 aa).

WD repeat units lie at residues 22 to 61, 87 to 128, 171 to 209, 220 to 260, 279 to 317, 334 to 375, and 410 to 446; these read TPAD…KNAP, EIEE…KRPE, GHTY…RSFN, DLTE…LCDK, EIIS…RPIE, ENDC…DVTL, and DFTK…NSDM.

Belongs to the phosphatase 2A regulatory subunit B family. In terms of assembly, PP2A consists of a common heterodimeric core enzyme, composed of a 36 kDa catalytic subunit (subunit C) and a 65 kDa constant regulatory subunit (PR65 or subunit A), that associates with a variety of regulatory subunits. Proteins that associate with the core dimer include three families of regulatory subunits B (the R2/B/PR55/B55, R3/B''/PR72/PR130/PR59 and R5/B'/B56 families), the 48 kDa variable regulatory subunit, viral proteins, and cell signaling molecules. Interacts with IER5.

Functionally, the B regulatory subunit might modulate substrate selectivity and catalytic activity, and might also direct the localization of the catalytic enzyme to a particular subcellular compartment. This is Serine/threonine-protein phosphatase 2A 55 kDa regulatory subunit B gamma isoform (PPP2R2C) from Macaca fascicularis (Crab-eating macaque).